A 264-amino-acid polypeptide reads, in one-letter code: Probable metallo-hydrolase YflN (264 aa).

Zn(2+)-binding residues include H80, H82, D84, H85, H169, D188, and H241.

The protein belongs to the metallo-beta-lactamase superfamily. It depends on Zn(2+) as a cofactor.

This is Probable metallo-hydrolase YflN (yflN) from Bacillus subtilis (strain 168).